We begin with the raw amino-acid sequence, 386 residues long: Ribonucleoside-diphosphate reductase subunit M2 (386 aa).

Residues 1 to 24 are compositionally biased toward polar residues; that stretch reads MSSTRSPLKTKNENTISTKMNNMS. The tract at residues 1–36 is disordered; the sequence is MSSTRSPLKTKNENTISTKMNNMSFVDKENTPPSLS. A Phosphoserine modification is found at S6. T31 carries the phosphothreonine modification. Fe cation is bound by residues D135, E166, and H169. Y173 is an active-site residue. Residues E229, E263, and H266 each coordinate Fe cation.

Belongs to the ribonucleoside diphosphate reductase small chain family. As to quaternary structure, heterodimer of a large and a small subunit. Requires Fe cation as cofactor.

It localises to the cytoplasm. It carries out the reaction a 2'-deoxyribonucleoside 5'-diphosphate + [thioredoxin]-disulfide + H2O = a ribonucleoside 5'-diphosphate + [thioredoxin]-dithiol. Provides the precursors necessary for DNA synthesis. Catalyzes the biosynthesis of deoxyribonucleotides from the corresponding ribonucleotides. The polypeptide is Ribonucleoside-diphosphate reductase subunit M2 (rrm2) (Danio rerio (Zebrafish)).